Here is a 425-residue protein sequence, read N- to C-terminus: Glutamate-1-semialdehyde 2,1-aminomutase (425 aa).

Lysine 265 bears the N6-(pyridoxal phosphate)lysine mark.

The protein belongs to the class-III pyridoxal-phosphate-dependent aminotransferase family. HemL subfamily. As to quaternary structure, homodimer. Pyridoxal 5'-phosphate serves as cofactor.

The protein localises to the cytoplasm. It catalyses the reaction (S)-4-amino-5-oxopentanoate = 5-aminolevulinate. It participates in porphyrin-containing compound metabolism; protoporphyrin-IX biosynthesis; 5-aminolevulinate from L-glutamyl-tRNA(Glu): step 2/2. In Psychromonas ingrahamii (strain DSM 17664 / CCUG 51855 / 37), this protein is Glutamate-1-semialdehyde 2,1-aminomutase.